We begin with the raw amino-acid sequence, 253 residues long: Phycobilisome rod-core linker polypeptide CpcG4 (253 aa).

The PBS-linker domain maps to S11 to Q191.

Belongs to the phycobilisome linker protein family. In terms of assembly, part of the phycobilisome, a hemidiscoidal structure that is composed of two distinct substructures: a core complex and a number of rods radiating from the core.

The protein localises to the cellular thylakoid membrane. Its function is as follows. Rod-core linker protein required for attachment of phycocyanin to allophycocyanin in cores of phycobilisomes. In terms of biological role, linker polypeptides determine the state of aggregation and the location of the disk-shaped phycobiliprotein units within the phycobilisome and modulate their spectroscopic properties in order to mediate a directed and optimal energy transfer. This Nostoc sp. (strain PCC 7120 / SAG 25.82 / UTEX 2576) protein is Phycobilisome rod-core linker polypeptide CpcG4.